The primary structure comprises 217 residues: Probable GTP-binding protein EngB (217 aa).

The region spanning 29–213 (GPSEVAFAGR…RQAIAQTVGI (185 aa)) is the EngB-type G domain. Residues 37-44 (GRSNVGKS), 64-68 (GRTQE), 91-94 (DMPG), 158-161 (TKTD), and 192-194 (TSS) each bind GTP. Positions 44 and 66 each coordinate Mg(2+).

It belongs to the TRAFAC class TrmE-Era-EngA-EngB-Septin-like GTPase superfamily. EngB GTPase family. The cofactor is Mg(2+).

Functionally, necessary for normal cell division and for the maintenance of normal septation. The sequence is that of Probable GTP-binding protein EngB from Rhizobium etli (strain CIAT 652).